Here is a 211-residue protein sequence, read N- to C-terminus: Thiamine-phosphate synthase (211 aa).

4-amino-2-methyl-5-(diphosphooxymethyl)pyrimidine is bound by residues 44–48 and N75; that span reads QYRNK. Residues D76 and D95 each contribute to the Mg(2+) site. S114 is a binding site for 4-amino-2-methyl-5-(diphosphooxymethyl)pyrimidine. 140 to 142 is a 2-[(2R,5Z)-2-carboxy-4-methylthiazol-5(2H)-ylidene]ethyl phosphate binding site; the sequence is TKS. Position 143 (K143) interacts with 4-amino-2-methyl-5-(diphosphooxymethyl)pyrimidine. G171 contributes to the 2-[(2R,5Z)-2-carboxy-4-methylthiazol-5(2H)-ylidene]ethyl phosphate binding site.

This sequence belongs to the thiamine-phosphate synthase family. It depends on Mg(2+) as a cofactor.

The enzyme catalyses 2-[(2R,5Z)-2-carboxy-4-methylthiazol-5(2H)-ylidene]ethyl phosphate + 4-amino-2-methyl-5-(diphosphooxymethyl)pyrimidine + 2 H(+) = thiamine phosphate + CO2 + diphosphate. It carries out the reaction 2-(2-carboxy-4-methylthiazol-5-yl)ethyl phosphate + 4-amino-2-methyl-5-(diphosphooxymethyl)pyrimidine + 2 H(+) = thiamine phosphate + CO2 + diphosphate. The catalysed reaction is 4-methyl-5-(2-phosphooxyethyl)-thiazole + 4-amino-2-methyl-5-(diphosphooxymethyl)pyrimidine + H(+) = thiamine phosphate + diphosphate. It functions in the pathway cofactor biosynthesis; thiamine diphosphate biosynthesis; thiamine phosphate from 4-amino-2-methyl-5-diphosphomethylpyrimidine and 4-methyl-5-(2-phosphoethyl)-thiazole: step 1/1. Its function is as follows. Condenses 4-methyl-5-(beta-hydroxyethyl)thiazole monophosphate (THZ-P) and 2-methyl-4-amino-5-hydroxymethyl pyrimidine pyrophosphate (HMP-PP) to form thiamine monophosphate (TMP). This is Thiamine-phosphate synthase from Koribacter versatilis (strain Ellin345).